The following is a 404-amino-acid chain: Probable homogentisate phytyltransferase 1, chloroplastic (404 aa).

The N-terminal 77 residues, 1–77, are a transit peptide targeting the chloroplast; sequence MDSLRLRPSL…SHHRIPHRPT (77 aa). The segment at 68 to 96 is disordered; sequence SHHRIPHRPTSSSADASGQPLQSSAEAHD. Positions 76 to 92 are enriched in polar residues; that stretch reads PTSSSADASGQPLQSSA. 9 helical membrane-spanning segments follow: residues 119–139, 144–164, 184–204, 216–238, 245–265, 282–302, 325–345, 348–368, and 382–402; these read TVIG…ENLS, LFLT…IYIV, LASG…FAAM, PLFL…LPFL, VVAA…AFFL, LIFA…FKDI, VFWI…LMGA, ACLW…AILW, and ITSF…LIPL.

It belongs to the UbiA prenyltransferase family.

It is found in the plastid. The protein resides in the chloroplast thylakoid membrane. The catalysed reaction is phytyl diphosphate + homogentisate + H(+) = 2-methyl-6-phytyl-1,4-benzene-1,4-diol + CO2 + diphosphate. The protein operates within cofactor biosynthesis; tocopherol biosynthesis. Involved in the synthesis of tocopherol (vitamin E). Catalyzes the condensation of homogentisate and phytyl diphosphate to form dimethylphytylhydroquinone. This Oryza sativa subsp. japonica (Rice) protein is Probable homogentisate phytyltransferase 1, chloroplastic (HPT1).